We begin with the raw amino-acid sequence, 394 residues long: Bone morphogenetic protein 2 (394 aa).

Residues 1 to 19 (MVAGTRCLLVLLLPQVLLG) form the signal peptide. Positions 20–280 (GAAGLIPELG…GHPLHKREKR (261 aa)) are cleaved as a propeptide — cleaved by PCSK5. S86 is subject to Phosphoserine. Residues N134, N162, and N198 are each glycosylated (N-linked (GlcNAc...) asparagine). The disordered stretch occupies residues 269-291 (GKGHPLHKREKRQAKHKQRKRLK). The segment covering 272 to 291 (HPLHKREKRQAKHKQRKRLK) has biased composition (basic residues). Intrachain disulfides connect C294/C359, C323/C391, and C327/C393. Residue N336 is glycosylated (N-linked (GlcNAc...) asparagine).

This sequence belongs to the TGF-beta family. Homodimer; disulfide-linked. Interacts with SOSTDC1. Interacts with GREM2, RGMA, RGMB and RGMC. Interacts with ASPN. Interacts with MAFP5. Interacts with FBN1 (via N-terminal domain) and FBN2. Interacts with type I receptor BMPR1A. Interacts with type II receptor BMPR2. Interacts with SCUBE3. Interacts with TNFAIP6 (primarily via Link domain); this interaction is inhibited by hyaluronan. Interacts with ERFE. Interacts with BMPR1A/ALK3; the interaction may induce HAMP expression. Forms heterodimers with BMP6 in vitro; the heterodimer then binds to its receptor BMPR1A /ALK3 and may induce HAMP expression. Interacts with TGFBR3.

The protein resides in the secreted. Functionally, growth factor of the TGF-beta superfamily that plays essential roles in many developmental processes, including cardiogenesis, neurogenesis, and osteogenesis. Induces cartilage and bone formation. Initiates the canonical BMP signaling cascade by associating with type I receptor BMPR1A and type II receptor BMPR2. Once all three components are bound together in a complex at the cell surface, BMPR2 phosphorylates and activates BMPR1A. In turn, BMPR1A propagates signal by phosphorylating SMAD1/5/8 that travel to the nucleus and act as activators and repressors of transcription of target genes. Also acts to promote expression of HAMP, via the interaction with its receptor BMPR1A/ALK3. Can also signal through non-canonical pathways such as ERK/MAP kinase signaling cascade that regulates osteoblast differentiation. Also stimulates the differentiation of myoblasts into osteoblasts via the EIF2AK3-EIF2A-ATF4 pathway by stimulating EIF2A phosphorylation which leads to increased expression of ATF4 which plays a central role in osteoblast differentiation. Acts as a positive regulator of odontoblast differentiation during mesenchymal tooth germ formation, expression is repressed during the bell stage by MSX1-mediated inhibition of CTNNB1 signaling. The polypeptide is Bone morphogenetic protein 2 (Bmp2) (Mus musculus (Mouse)).